A 308-amino-acid chain; its full sequence is tRNA pseudouridine synthase B (308 aa).

Asp-44 functions as the Nucleophile in the catalytic mechanism.

Belongs to the pseudouridine synthase TruB family. Type 1 subfamily.

It carries out the reaction uridine(55) in tRNA = pseudouridine(55) in tRNA. In terms of biological role, responsible for synthesis of pseudouridine from uracil-55 in the psi GC loop of transfer RNAs. The sequence is that of tRNA pseudouridine synthase B from Bdellovibrio bacteriovorus (strain ATCC 15356 / DSM 50701 / NCIMB 9529 / HD100).